The following is a 43-amino-acid chain: Potassium channel toxin gamma-KTx 4.9 (43 aa).

Disulfide bonds link Cys-5–Cys-23, Cys-11–Cys-34, Cys-20–Cys-39, and Cys-24–Cys-41.

This sequence belongs to the ergtoxin family. Gamma-KTx 4 subfamily. As to expression, expressed by the venom gland.

The protein localises to the secreted. In terms of biological role, reversibly blocks Kv11/ERG potassium channels. This is Potassium channel toxin gamma-KTx 4.9 from Centruroides sculpturatus (Arizona bark scorpion).